Here is a 787-residue protein sequence, read N- to C-terminus: Endonuclease MutS2 (787 aa).

334-341 (GPNTGGKT) serves as a coordination point for ATP. The segment at 685-709 (KAQDPAKSAKQPRASVKRSGSSGMS) is disordered. One can recognise a Smr domain in the interval 712 to 787 (LDLRGHRYEE…GDGSTVVHFK (76 aa)).

Belongs to the DNA mismatch repair MutS family. MutS2 subfamily. In terms of assembly, homodimer. Binds to stalled ribosomes, contacting rRNA.

Endonuclease that is involved in the suppression of homologous recombination and thus may have a key role in the control of bacterial genetic diversity. Its function is as follows. Acts as a ribosome collision sensor, splitting the ribosome into its 2 subunits. Detects stalled/collided 70S ribosomes which it binds and splits by an ATP-hydrolysis driven conformational change. Acts upstream of the ribosome quality control system (RQC), a ribosome-associated complex that mediates the extraction of incompletely synthesized nascent chains from stalled ribosomes and their subsequent degradation. Probably generates substrates for RQC. This is Endonuclease MutS2 from Levilactobacillus brevis (strain ATCC 367 / BCRC 12310 / CIP 105137 / JCM 1170 / LMG 11437 / NCIMB 947 / NCTC 947) (Lactobacillus brevis).